The chain runs to 255 residues: Probable transcriptional regulatory protein CMS0715 (255 aa).

This sequence belongs to the TACO1 family.

The protein resides in the cytoplasm. The chain is Probable transcriptional regulatory protein CMS0715 from Clavibacter sepedonicus (Clavibacter michiganensis subsp. sepedonicus).